A 189-amino-acid chain; its full sequence is Putative zinc finger protein ORF189 (189 aa).

The segment at 114–137 (YVCPYCVSRFPTVRALKIHLKRRH) adopts a C2H2-type zinc-finger fold.

The sequence is that of Putative zinc finger protein ORF189 from Acidianus two-tailed virus (ATV).